We begin with the raw amino-acid sequence, 341 residues long: MMKHVLNKCLMGESLSVQEAEQVMEQIMSGRATASQVASLITMMRVRGETAEEILGFAKGMRAYARKFPAVIEGTIDTCGTGGDGLGTFNISTASALVLASLGVPVAKHGNRSVSSKSGSADVLEELGINIQASVEEACQMLETTNLCFLFAPLYHQSMRHVAGPRKEIGFRTIFNLLGPLTNPAGARYQLLGVYDEAAALKMGEALRQLGSEHSLLVTGADGLDECAIHGDTHVVEVKDGRCETYRFSPDDVGLPLGNLADIQVDTPAESAALIRAIFSGDGPQAAKNIVALNAGAALYACGNASHIAEGVHYASKAIESKRVFRYLQSLQQQGRGIKHA.

5-phospho-alpha-D-ribose 1-diphosphate contacts are provided by residues G80, G83–D84, T88, N90–T93, K108–S116, and S120. Residue G80 participates in anthranilate binding. Residue S92 participates in Mg(2+) binding. Anthranilate is bound at residue N111. Residue R166 coordinates anthranilate. The Mg(2+) site is built by D225 and E226.

The protein belongs to the anthranilate phosphoribosyltransferase family. Homodimer. Mg(2+) is required as a cofactor.

The enzyme catalyses N-(5-phospho-beta-D-ribosyl)anthranilate + diphosphate = 5-phospho-alpha-D-ribose 1-diphosphate + anthranilate. It participates in amino-acid biosynthesis; L-tryptophan biosynthesis; L-tryptophan from chorismate: step 2/5. In terms of biological role, catalyzes the transfer of the phosphoribosyl group of 5-phosphorylribose-1-pyrophosphate (PRPP) to anthranilate to yield N-(5'-phosphoribosyl)-anthranilate (PRA). This chain is Anthranilate phosphoribosyltransferase, found in Shouchella clausii (strain KSM-K16) (Alkalihalobacillus clausii).